We begin with the raw amino-acid sequence, 370 residues long: D-alanine--D-alanine ligase (370 aa).

The region spanning lysine 144–aspartate 352 is the ATP-grasp domain. An ATP-binding site is contributed by glutamate 177 to glutamate 232. The Mg(2+) site is built by aspartate 306, glutamate 319, and asparagine 321.

It belongs to the D-alanine--D-alanine ligase family. Mg(2+) is required as a cofactor. Mn(2+) serves as cofactor.

The protein localises to the cytoplasm. The catalysed reaction is 2 D-alanine + ATP = D-alanyl-D-alanine + ADP + phosphate + H(+). The protein operates within cell wall biogenesis; peptidoglycan biosynthesis. Functionally, cell wall formation. This chain is D-alanine--D-alanine ligase, found in Listeria welshimeri serovar 6b (strain ATCC 35897 / DSM 20650 / CCUG 15529 / CIP 8149 / NCTC 11857 / SLCC 5334 / V8).